A 377-amino-acid chain; its full sequence is 3-dehydroquinate synthase (377 aa).

Residues glycine 113–aspartate 117, threonine 137–threonine 138, lysine 150, lysine 159, and phenylalanine 177–threonine 180 each bind NAD(+). Positions 192, 254, and 273 each coordinate Zn(2+).

Belongs to the sugar phosphate cyclases superfamily. Dehydroquinate synthase family. Co(2+) is required as a cofactor. The cofactor is Zn(2+). Requires NAD(+) as cofactor.

The protein localises to the cytoplasm. It carries out the reaction 7-phospho-2-dehydro-3-deoxy-D-arabino-heptonate = 3-dehydroquinate + phosphate. The protein operates within metabolic intermediate biosynthesis; chorismate biosynthesis; chorismate from D-erythrose 4-phosphate and phosphoenolpyruvate: step 2/7. In terms of biological role, catalyzes the conversion of 3-deoxy-D-arabino-heptulosonate 7-phosphate (DAHP) to dehydroquinate (DHQ). The protein is 3-dehydroquinate synthase of Bartonella quintana (strain Toulouse) (Rochalimaea quintana).